A 568-amino-acid polypeptide reads, in one-letter code: Nucleoprotein (568 aa).

Residues 54-240 (MRKEKRDDSD…IDGNKSAINI (187 aa)) are binding site for the cap structure m7GTP. Positions 388 and 390 each coordinate Mn(2+). Glu-398, Cys-505, His-508, and Cys-528 together coordinate Zn(2+). Residue Asp-532 participates in Mn(2+) binding.

It belongs to the arenaviridae nucleocapsid protein family. Homomultimerizes to form the nucleocapsid. Binds to viral genomic RNA. Interacts with glycoprotein G2. Interacts with protein Z; this interaction probably directs the encapsidated genome to budding sites. Interacts with protein L; this interaction does not interfere with Z-L interaction. Interacts with host IKBKE (via Protein kinase domain); the interaction inhibits IKBKE kinase activity.

The protein resides in the virion. It is found in the host cytoplasm. Its function is as follows. Encapsidates the genome, protecting it from nucleases. The encapsidated genomic RNA is termed the nucleocapsid (NC). Serves as template for viral transcription and replication. The increased presence of protein N in host cell does not seem to trigger the switch from transcription to replication as observed in other negative strain RNA viruses. Through the interaction with host IKBKE, strongly inhibits the phosphorylation and nuclear translocation of host IRF3, a protein involved in interferon activation pathway, leading to the inhibition of interferon-beta and IRF3-dependent promoters activation. Also encodes a functional 3'-5' exoribonuclease that degrades preferentially dsRNA substrates and thereby participates in the suppression of interferon induction. The protein is Nucleoprotein of Praomys (African soft-furred rats).